The primary structure comprises 578 residues: Lysine--tRNA ligase (578 aa).

Glu-414 and Glu-421 together coordinate Mg(2+).

The protein belongs to the class-II aminoacyl-tRNA synthetase family. Homodimer. It depends on Mg(2+) as a cofactor.

The protein localises to the cytoplasm. It catalyses the reaction tRNA(Lys) + L-lysine + ATP = L-lysyl-tRNA(Lys) + AMP + diphosphate. The polypeptide is Lysine--tRNA ligase (Porphyromonas gingivalis (strain ATCC BAA-308 / W83)).